The sequence spans 930 residues: Protocadherin gamma-A4 (930 aa).

The N-terminal stretch at 1–27 (MAAPYKSDRRGLIWICIFLGSLCDIRA) is a signal peptide. Cadherin domains are found at residues 28–132 (EQIR…APSF), 133–241 (GAQQ…APVF), 242–346 (TQPE…APEV), 347–451 (TVTS…PPTF), 452–561 (THAS…TPEI), and 569–682 (DGST…APID). Topologically, residues 28-691 (EQIRYSVPEE…DQEDSDITLY (664 aa)) are extracellular. Asn-418 and Asn-544 each carry an N-linked (GlcNAc...) asparagine glycan. A helical membrane pass occupies residues 692-712 (LVVAVAAVSCVFLAFVIVLLI). At 713 to 930 (HRLRRWHSTR…KKKSGKKEKK (218 aa)) the chain is on the cytoplasmic side. 2 disordered regions span residues 803–839 (SSLQ…WPNN) and 900–930 (ATLT…KEKK). A compositionally biased stretch (basic residues) spans 920–930 (NKKKSGKKEKK).

Its subcellular location is the cell membrane. In terms of biological role, potential calcium-dependent cell-adhesion protein. May be involved in the establishment and maintenance of specific neuronal connections in the brain. This chain is Protocadherin gamma-A4, found in Mus musculus (Mouse).